The chain runs to 283 residues: Myeloid differentiation primary response protein MyD88-A (283 aa).

The 79-residue stretch at 27–105 folds into the Death domain; that stretch reads RLCLYLNPDA…DILTDLGPLI (79 aa). The interval 106–143 is intermediate domain; the sequence is EADCMKYLEKKHVPLPIQDDKVDSSEQYRITKSDDPYG. The TIR domain occupies 147–281; that stretch reads ETFDAFICYC…WFWDKLAKAL (135 aa).

The protein localises to the cytoplasm. Functionally, adapter protein involved in the Toll-like receptor and IL-1 receptor signaling pathway in the innate immune response. Activates expression of target genes in the Spemann organizer region during early embryonic development. Is required for normal axis formation. This chain is Myeloid differentiation primary response protein MyD88-A (myd88-a), found in Xenopus laevis (African clawed frog).